A 587-amino-acid polypeptide reads, in one-letter code: Phosphatidate phosphatase APP1 (587 aa).

Disordered regions lie at residues M1–K28 and P150–R178. Low complexity-rich tracts occupy residues S9 to G22 and S163 to K174. The DXDXT motif signature appears at D281–T285. Residues Q452–N521 are disordered. An interaction with SH3 domain of ABP1 region spans residues R467–T483.

As to quaternary structure, monomer. Interacts with ABP1. It depends on Mg(2+) as a cofactor. N-glycosylated.

The protein resides in the cytoplasm. It localises to the cytoskeleton. The protein localises to the actin patch. It carries out the reaction a 1,2-diacyl-sn-glycero-3-phosphate + H2O = a 1,2-diacyl-sn-glycerol + phosphate. The enzyme catalyses 1,2-di-(9Z-octadecenoyl)-sn-glycero-3-phosphate + H2O = 1,2-di-(9Z-octadecenoyl)-sn-glycerol + phosphate. Its activity is regulated as follows. Inhibited by N-ethylmaleimide. Mg(2+)-dependent phosphatidate (PA) phosphatase which catalyzes the dephosphorylation of PA to yield diacylglycerol. May play a role in vesicular trafficking through its PAP activity at cortical actin patches. Can also utilize diacylglycerol pyrophosphate and lyso-PA as substrates with specificity constants 4- and 7-fold lower, respectively, when compared with PA. The protein is Phosphatidate phosphatase APP1 (APP1) of Saccharomyces cerevisiae (strain ATCC 204508 / S288c) (Baker's yeast).